The chain runs to 706 residues: Ribosomal RNA large subunit methyltransferase K/L (706 aa).

In terms of domain architecture, THUMP spans 43 to 154 (LMYQSLLWSR…RDMASVALDL (112 aa)).

Belongs to the methyltransferase superfamily. RlmKL family.

Its subcellular location is the cytoplasm. It carries out the reaction guanosine(2445) in 23S rRNA + S-adenosyl-L-methionine = N(2)-methylguanosine(2445) in 23S rRNA + S-adenosyl-L-homocysteine + H(+). The enzyme catalyses guanosine(2069) in 23S rRNA + S-adenosyl-L-methionine = N(2)-methylguanosine(2069) in 23S rRNA + S-adenosyl-L-homocysteine + H(+). In terms of biological role, specifically methylates the guanine in position 2445 (m2G2445) and the guanine in position 2069 (m7G2069) of 23S rRNA. This is Ribosomal RNA large subunit methyltransferase K/L from Yersinia pestis (strain Pestoides F).